A 563-amino-acid polypeptide reads, in one-letter code: Efflux pump FUS6 (563 aa).

Positions 1–30 (MPQPDKMAAVNNAMPQPAPEKSLSSDPQPE) are disordered. 5 helical membrane passes run 39-59 (WLIFVAIALTTFLAALDTSII), 75-95 (LYVWIIDAYLLASTATIPIFA), 105-125 (SLTLIAVCIFTLGSGLCGGAH), 138-158 (GIGGGGILTMSEIVVCDMVSI), and 167-187 (IIGGVWAIAAVVAPVMGGAFA). A glycan (N-linked (GlcNAc...) asparagine) is linked at asparagine 189. 3 consecutive transmembrane segments (helical) span residues 194 to 214 (WIFYINLPIAGVSLVALGLFL), 233 to 253 (WGGSVLLIGSVTSIVLALSWG), and 261 to 281 (GWQTIVPLVIGLLALVAFFAY). Asparagine 299 carries N-linked (GlcNAc...) asparagine glycosylation. 6 helical membrane-spanning segments follow: residues 305–325 (LLVISFIHSLLLYWVCYFLPV), 340–360 (VMLFPIACTSAPAGVAAGITI), 368–388 (VWHFTGFVLMSIACGLFTLLD), 401–421 (ILFGVGTGTVFTSTLPPILAS), 433–453 (AWTFIRNFGSIWGVAIPAAVF), and 509–529 (KVVWQVSLAFCLLGFILCFFV). An N-linked (GlcNAc...) asparagine glycan is attached at asparagine 553.

Belongs to the major facilitator superfamily. TCR/Tet family.

The protein resides in the membrane. Functionally, efflux pump; part of the gene cluster that mediates the biosynthesis of the mycotoxin fusarin C. Within the cluster, FUS1, FUS2, FUS8 and FUS9 are sufficient for fusarin production. The other FUS cluster members are not essential for fusarin C biosynthesis. This chain is Efflux pump FUS6, found in Gibberella moniliformis (strain M3125 / FGSC 7600) (Maize ear and stalk rot fungus).